We begin with the raw amino-acid sequence, 232 residues long: Mitochondrial import inner membrane translocase subunit Tim21 (232 aa).

The N-terminal 31 residues, Met-1 to Leu-31, are a transit peptide targeting the mitochondrion. A helical membrane pass occupies residues Phe-96–Val-116.

The protein belongs to the TIM21 family.

Its subcellular location is the mitochondrion membrane. In terms of biological role, may participate in the translocation of transit peptide-containing proteins across the mitochondrial inner membrane. The polypeptide is Mitochondrial import inner membrane translocase subunit Tim21 (timm21) (Xenopus laevis (African clawed frog)).